The sequence spans 296 residues: Polyamine aminopropyltransferase (296 aa).

A PABS domain is found at 16–251 (HLWYFEYYTG…GMWSYTFASK (236 aa)). Position 46 (Gln-46) interacts with S-methyl-5'-thioadenosine. His-77 and Asp-101 together coordinate spermidine. Residues Glu-121 and 152–153 (NG) contribute to the S-methyl-5'-thioadenosine site. The Proton acceptor role is filled by Asp-170. 170-173 (DSTD) contacts spermidine.

It belongs to the spermidine/spermine synthase family. Homodimer or homotetramer.

The protein localises to the cytoplasm. It catalyses the reaction S-adenosyl 3-(methylsulfanyl)propylamine + putrescine = S-methyl-5'-thioadenosine + spermidine + H(+). It participates in amine and polyamine biosynthesis; spermidine biosynthesis; spermidine from putrescine: step 1/1. Catalyzes the irreversible transfer of a propylamine group from the amino donor S-adenosylmethioninamine (decarboxy-AdoMet) to putrescine (1,4-diaminobutane) to yield spermidine. This Thermotoga neapolitana (strain ATCC 49049 / DSM 4359 / NBRC 107923 / NS-E) protein is Polyamine aminopropyltransferase.